We begin with the raw amino-acid sequence, 92 residues long: Co-chaperonin GroES (92 aa).

It belongs to the GroES chaperonin family. In terms of assembly, heptamer of 7 subunits arranged in a ring. Interacts with the chaperonin GroEL.

The protein resides in the cytoplasm. Its function is as follows. Together with the chaperonin GroEL, plays an essential role in assisting protein folding. The GroEL-GroES system forms a nano-cage that allows encapsulation of the non-native substrate proteins and provides a physical environment optimized to promote and accelerate protein folding. GroES binds to the apical surface of the GroEL ring, thereby capping the opening of the GroEL channel. The polypeptide is Co-chaperonin GroES (Thermotoga petrophila (strain ATCC BAA-488 / DSM 13995 / JCM 10881 / RKU-1)).